We begin with the raw amino-acid sequence, 362 residues long: Cobalt-precorrin-5B C(1)-methyltransferase (362 aa).

This sequence belongs to the CbiD family.

It catalyses the reaction Co-precorrin-5B + S-adenosyl-L-methionine = Co-precorrin-6A + S-adenosyl-L-homocysteine. Its pathway is cofactor biosynthesis; adenosylcobalamin biosynthesis; cob(II)yrinate a,c-diamide from sirohydrochlorin (anaerobic route): step 6/10. Its function is as follows. Catalyzes the methylation of C-1 in cobalt-precorrin-5B to form cobalt-precorrin-6A. In Synechococcus sp. (strain CC9902), this protein is Cobalt-precorrin-5B C(1)-methyltransferase.